The sequence spans 102 residues: NADH-quinone oxidoreductase subunit K (102 aa).

3 helical membrane-spanning segments follow: residues 6 to 26 (LTGF…GVLA), 30 to 50 (ILFQ…AFIA), and 63 to 83 (MFVL…ALFL).

The protein belongs to the complex I subunit 4L family. In terms of assembly, NDH-1 is composed of 14 different subunits. Subunits NuoA, H, J, K, L, M, N constitute the membrane sector of the complex.

It is found in the cell inner membrane. The enzyme catalyses a quinone + NADH + 5 H(+)(in) = a quinol + NAD(+) + 4 H(+)(out). Its function is as follows. NDH-1 shuttles electrons from NADH, via FMN and iron-sulfur (Fe-S) centers, to quinones in the respiratory chain. The immediate electron acceptor for the enzyme in this species is believed to be ubiquinone. Couples the redox reaction to proton translocation (for every two electrons transferred, four hydrogen ions are translocated across the cytoplasmic membrane), and thus conserves the redox energy in a proton gradient. The chain is NADH-quinone oxidoreductase subunit K from Rhodopseudomonas palustris (strain BisA53).